Reading from the N-terminus, the 718-residue chain is Coiled-coil domain-containing protein 157 (718 aa).

Positions 300–603 form a coiled coil; it reads LRAQLEDAEG…LTKIREVAQQ (304 aa). The span at 469 to 482 shows a compositional bias: basic and acidic residues; sequence RGSLDEAEAQRSEL. Disordered regions lie at residues 469–490 and 617–690; these read RGSL…QSLQ and PPYK…TQNP. The span at 639-659 shows a compositional bias: low complexity; sequence TGRRQSPGSRTSSTGRTHPGG.

The protein is Coiled-coil domain-containing protein 157 (Ccdc157) of Mus musculus (Mouse).